The primary structure comprises 796 residues: Pathogenesis-related homeodomain protein (796 aa).

2 disordered regions span residues 34–57 (KKGK…EELC) and 80–99 (VKKT…KVEV). Basic residues predominate over residues 81–90 (KKTRKRKSKR). The PHD-type zinc-finger motif lies at 190-247 (HIFCAECNSREAFPDNDIILCDGTCNRAFHQKCLDPPLETESIPPGDQGWFCKFCDCK). Disordered stretches follow at residues 282–347 (SEAT…STGS), 393–422 (LQEQ…STLV), and 511–736 (NRKT…TEEE). The segment covering 292-303 (WPSDDSKDDDYD) has biased composition (acidic residues). Residues 452 to 511 (GGRRRMFRLPRNAVEKLRQVFAETELPSKAVRDRLAKELSLDPEKVNKWFKNTRYMALRN) constitute a DNA-binding region (homeobox). Polar residues-rich tracts occupy residues 538–547 (ENNTETNEVQ) and 560–569 (ATNQNILSPC). Over residues 570–580 (NNNQEEFQQEN) the composition is skewed to low complexity. A compositionally biased stretch (polar residues) spans 581–600 (VSFPSPTDESQQYLEQNDSS). 4 consecutive repeat copies span residues 605-631 (PHEK…MMKE), 632-658 (PHEE…MIEE), 659-685 (PHEE…MMEE), and 686-712 (PHDE…MTEE). The tract at residues 605–735 (PHEKQSSEIS…KETGRKMTEE (131 aa)) is 5 X 27 AA tandem repeats. Basic and acidic residues-rich tracts occupy residues 624-636 (TESK…HEEL), 645-690 (AAEE…HDEL), and 700-733 (VEEK…RKMT). A 5; truncated repeat occupies 713 to 735 (SHEELSNEMSLEEKETGRKMTEE). A leucine-zipper region spans residues 738–759 (LEAVMEMLCRTENKLLDVTQRL).

The protein belongs to the PHD-associated homeobox family.

The protein localises to the nucleus. Specifically binds to the fungal elicitor-responsive DNA element, 5'-CTAATTGTTTA-3', of the gene PR2 promoter. The protein is Pathogenesis-related homeodomain protein (PRH) of Arabidopsis thaliana (Mouse-ear cress).